Consider the following 148-residue polypeptide: 3-dehydroquinate dehydratase (148 aa).

Y23 acts as the Proton acceptor in catalysis. N75, H81, and D88 together coordinate substrate. H101 functions as the Proton donor in the catalytic mechanism. Substrate is bound by residues 102-103 (MS) and R112.

It belongs to the type-II 3-dehydroquinase family. As to quaternary structure, homododecamer.

The enzyme catalyses 3-dehydroquinate = 3-dehydroshikimate + H2O. The protein operates within metabolic intermediate biosynthesis; chorismate biosynthesis; chorismate from D-erythrose 4-phosphate and phosphoenolpyruvate: step 3/7. Catalyzes a trans-dehydration via an enolate intermediate. This chain is 3-dehydroquinate dehydratase, found in Syntrophotalea carbinolica (strain DSM 2380 / NBRC 103641 / GraBd1) (Pelobacter carbinolicus).